The sequence spans 235 residues: Ribosomal RNA large subunit methyltransferase E (235 aa).

Residues G76, W78, D99, D115, and D139 each contribute to the S-adenosyl-L-methionine site. K179 serves as the catalytic Proton acceptor.

It belongs to the class I-like SAM-binding methyltransferase superfamily. RNA methyltransferase RlmE family.

The protein resides in the cytoplasm. The enzyme catalyses uridine(2552) in 23S rRNA + S-adenosyl-L-methionine = 2'-O-methyluridine(2552) in 23S rRNA + S-adenosyl-L-homocysteine + H(+). Its function is as follows. Specifically methylates the uridine in position 2552 of 23S rRNA at the 2'-O position of the ribose in the fully assembled 50S ribosomal subunit. In Rhodopseudomonas palustris (strain BisB5), this protein is Ribosomal RNA large subunit methyltransferase E.